The following is a 109-amino-acid chain: Phosphocarrier protein HPr (109 aa).

Positions Glu22 to Leu109 constitute an HPr domain. His36 acts as the Pros-phosphohistidine intermediate in catalysis.

Belongs to the HPr family.

The protein resides in the cytoplasm. General (non sugar-specific) component of the phosphoenolpyruvate-dependent sugar phosphotransferase system (sugar PTS). This major carbohydrate active-transport system catalyzes the phosphorylation of incoming sugar substrates concomitantly with their translocation across the cell membrane. The phosphoryl group from phosphoenolpyruvate (PEP) is transferred to the phosphoryl carrier protein HPr by enzyme I. Phospho-HPr then transfers it to the PTS EIIA domain. This Chlamydia trachomatis serovar D (strain ATCC VR-885 / DSM 19411 / UW-3/Cx) protein is Phosphocarrier protein HPr (ptsH).